An 838-amino-acid polypeptide reads, in one-letter code: Ribonucleoside-diphosphate reductase large subunit (838 aa).

Residues 6-97 (KLVTKRDGSV…VTALHKTTTE (92 aa)) form the ATP-cone domain. ATP-binding positions include 10–11 (KR), 16–22 (EPYDEKV), T58, and D62. S227 contributes to the GDP binding site. A disulfide bridge connects residues C228 and C454. Residues 236–238 (DSI), K253, R266, and 273–274 (AG) each bind dTTP. N437 is a GDP binding site. N437 acts as the Proton acceptor in catalysis. Residue C439 is the Cysteine radical intermediate of the active site. GDP is bound by residues E441 and 626–629 (TAST). E441 acts as the Proton acceptor in catalysis. A compositionally biased stretch (basic and acidic residues) spans 780 to 794 (KELPKPDKQSKEEVH). The interval 780-838 (KELPKPDKQSKEEVHGSVGRGKRKRVGEKPTANHSNAGAPNLNGPPDTDGDGGCLNCGS) is disordered.

This sequence belongs to the ribonucleoside diphosphate reductase large chain family. As to quaternary structure, heterodimer of a large and a small subunit.

It catalyses the reaction a 2'-deoxyribonucleoside 5'-diphosphate + [thioredoxin]-disulfide + H2O = a ribonucleoside 5'-diphosphate + [thioredoxin]-dithiol. The enzyme catalyses dCDP + [thioredoxin]-disulfide + H2O = CDP + [thioredoxin]-dithiol. Its activity is regulated as follows. Under complex allosteric control mediated by deoxynucleoside triphosphates and ATP binding to separate specificity and activation sites on the large subunit. The type of nucleotide bound at the specificity site determines substrate preference. It seems probable that ATP makes the enzyme reduce CDP and UDP, dGTP favors ADP reduction and dTTP favors GDP reduction. Stimulated by ATP and inhibited by dATP binding to the activity site. In terms of biological role, provides the precursors necessary for DNA synthesis. Catalyzes the rate limiting step in the de novo synthesis of deoxyribonucleotides by directly reducing ribonucleotides to the corresponding deoxyribonucleotides. The chain is Ribonucleoside-diphosphate reductase large subunit (RNR1) from Trypanosoma brucei brucei.